Here is a 404-residue protein sequence, read N- to C-terminus: MHKDPSIIVNINLREAKLKKKVREHLQSLGFTRSDSGALQAPGNTKDVIRALHSSQRAERIFANQKFITLRAAKLIKFFASGNEVIPDKISPVLERVKSGTWQGDLFRLAALTWSVPVSSGFGRRLRYLVWDESNGKLIGLIAIGDPVFNLAVRDNLIGWDTHARSSRLVNLMDAYVLGALPPYNALLGGKLIACLLRSRDLYDDFAKVYGDTVGVISQKKKQARLLAITTTSSMGRSSVYNRLKLDGIQYLKSIGYTGGWGHFHIPDSLFIELRDYLRDMDHAYADHYMFGNGPNWRLRTTKAALNVLGFRDNLMKHGIQREVFISQLAENATSILQTGKGEPDLTSLLSAKEIAECAMARWMVPRSIRNPEYRLWKARDLFDFISNDSLKFPPSDEIAKTVV.

It is found in the cytoplasm. Functionally, component of antiviral defense system Druantia type I, composed of DruA, DruB, DruC, DruD and DruE. Expression of Druantia in E.coli (strain MG1655) confers resistance to phage lambda, SECphi18, SECphi27 and T4. The sequence is that of Druantia protein DruA from Escherichia coli (strain UMEA 4076-1).